Consider the following 319-residue polypeptide: tRNA N6-adenosine threonylcarbamoyltransferase (319 aa).

Fe cation is bound by residues His-110 and His-114. Substrate is bound by residues 132–136 (VVSGG), Asp-165, Gly-178, Asp-182, and Asn-271. Position 300 (Asp-300) interacts with Fe cation.

Belongs to the KAE1 / TsaD family. Fe(2+) serves as cofactor.

Its subcellular location is the cytoplasm. The enzyme catalyses L-threonylcarbamoyladenylate + adenosine(37) in tRNA = N(6)-L-threonylcarbamoyladenosine(37) in tRNA + AMP + H(+). Its function is as follows. Required for the formation of a threonylcarbamoyl group on adenosine at position 37 (t(6)A37) in tRNAs that read codons beginning with adenine. Is involved in the transfer of the threonylcarbamoyl moiety of threonylcarbamoyl-AMP (TC-AMP) to the N6 group of A37, together with TsaE and TsaB. TsaD likely plays a direct catalytic role in this reaction. The sequence is that of tRNA N6-adenosine threonylcarbamoyltransferase from Mycoplasma capricolum subsp. capricolum (strain California kid / ATCC 27343 / NCTC 10154).